We begin with the raw amino-acid sequence, 81 residues long: ATP synthase subunit C, cyanelle (81 aa).

Transmembrane regions (helical) follow at residues 7–27 (AASV…PGIG) and 57–77 (LAFM…LLFA).

This sequence belongs to the ATPase C chain family. F-type ATPases have 2 components, F(1) - the catalytic core - and F(0) - the membrane proton channel. F(1) has five subunits: alpha(3), beta(3), gamma(1), delta(1), epsilon(1). F(0) has four main subunits: a(1), b(1), b'(1) and c(10-14). The alpha and beta chains form an alternating ring which encloses part of the gamma chain. F(1) is attached to F(0) by a central stalk formed by the gamma and epsilon chains, while a peripheral stalk is formed by the delta, b and b' chains.

Its subcellular location is the plastid. It is found in the cyanelle thylakoid membrane. F(1)F(0) ATP synthase produces ATP from ADP in the presence of a proton or sodium gradient. F-type ATPases consist of two structural domains, F(1) containing the extramembraneous catalytic core and F(0) containing the membrane proton channel, linked together by a central stalk and a peripheral stalk. During catalysis, ATP synthesis in the catalytic domain of F(1) is coupled via a rotary mechanism of the central stalk subunits to proton translocation. Functionally, key component of the F(0) channel; it plays a direct role in translocation across the membrane. A homomeric c-ring of between 10-14 subunits forms the central stalk rotor element with the F(1) delta and epsilon subunits. In Cyanophora paradoxa, this protein is ATP synthase subunit C, cyanelle.